The primary structure comprises 156 residues: Movement protein P17 (156 aa).

A homodimerization region spans residues 38–54; it reads AEDAEEEAIAAQEELEF. Disordered stretches follow at residues 55-80 and 131-156; these read PEDE…EVSP and AKYH…IKRG. Positions 57-156 are RNA-binding; that stretch reads DEAQARHSCL…RAAPKLIKRG (100 aa). 4 positions are modified to phosphoserine: serine 71, serine 79, serine 137, and serine 140. Residues 144–156 are compositionally biased toward basic residues; sequence KLRRAAPKLIKRG.

The protein belongs to the polerovirus movement protein family. As to quaternary structure, homodimer. Heterodimer with movement protein P3a. In terms of processing, expressed as a nonphosphorylated 20kDa form and a phosphorylated 22kDa form. Phosphorylated by a host PKC-related kinase. Serine phosphorylation is required for plamodesma targeting.

It is found in the host cell junction. The protein resides in the host plasmodesma. The protein localises to the host mitochondrion outer membrane. Its subcellular location is the host Golgi apparatus. It localises to the host chloroplast envelope. Its function is as follows. Together with movement protein P3a, facilitates long-distance movement of virions in host. Transports viral genome to neighboring plant cells directly through plasmosdesmata, without any budding. The movement protein allows efficient cell to cell propagation, by bypassing the host cell wall barrier. Binds ssRNA. The protein is Movement protein P17 of Solanum tuberosum (Potato).